The primary structure comprises 693 residues: Oxysterol-binding protein-related protein 2B (693 aa).

Over residues 1–15 the composition is skewed to polar residues; that stretch reads MPLTRSKSLPATENG. Residues 1–22 form a disordered region; that stretch reads MPLTRSKSLPATENGGSDRETL. Residues 25-154 enclose the PH domain; it reads GRSVAGILYK…WLQALASTRG (130 aa). Residues 207–239 are a coiled coil; it reads EVQEQIKLLHEERKKLLDALRQLEMANLEAEAS. 2 disordered regions span residues 256–298 and 600–639; these read LGRG…GEPD and EKLP…RMSR. Residues 274-284 show a composition bias toward acidic residues; the sequence is QEFEDISEEDE. 2 stretches are compositionally biased toward basic and acidic residues: residues 285-294 and 600-635; these read ASFHDTKESF and EKLP…ERRQ. A coiled-coil region spans residues 612-643; sequence DQRHLENGEYEKANEEKQRLERRQRMSRQIQE.

It belongs to the OSBP family. In terms of tissue distribution, expressed in roots, leaves, stems and flowers.

May be involved in the transport of sterols. The protein is Oxysterol-binding protein-related protein 2B (ORP2B) of Arabidopsis thaliana (Mouse-ear cress).